Consider the following 140-residue polypeptide: UPF0299 membrane protein CGSHiGG_01475 (140 aa).

4 consecutive transmembrane segments (helical) span residues 1–21, 33–52, 60–80, and 92–112; these read MIQK…MLYL, VPGS…TRVI, GASL…VGII, and ILLV…GFLG.

Belongs to the UPF0299 family.

The protein resides in the cell inner membrane. This Haemophilus influenzae (strain PittGG) protein is UPF0299 membrane protein CGSHiGG_01475.